Reading from the N-terminus, the 521-residue chain is Protein YjiT (521 aa).

The protein is Protein YjiT (yjiT) of Escherichia coli (strain K12).